Here is a 442-residue protein sequence, read N- to C-terminus: Yes-associated protein homolog 1 (442 aa).

The segment covering 1 to 10 has biased composition (basic residues); sequence MASKSIHKKH. A disordered region spans residues 1–84; the sequence is MASKSIHKKH…GSVDESSRTA (84 aa). 2 stretches are compositionally biased toward polar residues: residues 13–22 and 55–71; these read NSQQDKNQFS and LPSSYYHQKRNPGSSAH. Position 104 is a phosphoserine (Ser-104). Polar residues predominate over residues 108–120; that stretch reads LHTSVNNGQSSAT. The tract at residues 108 to 136 is disordered; the sequence is LHTSVNNGQSSATVPHPSHHNVHHQHSKS. The span at 124–134 shows a compositional bias: basic residues; that stretch reads PSHHNVHHQHS. The 34-residue stretch at 203 to 236 folds into the WW domain; the sequence is LPMPQGWEMCYDSDGVRYFKDHNSKTTTWDDPRL.

Belongs to the YAP1 family. Highly divergent. Interacts (via WW domain) with wts-1 (via N-terminus). Interacts (via WW domain) with egl-44; the interaction may regulate transcription. In terms of tissue distribution, expressed in epithelia, hypodermis, muscles, pharynx, intestine, gonadal sheath cells, vulva, spermatheca and in excretory tissue.

The protein localises to the cytoplasm. The protein resides in the nucleus. It localises to the cell projection. Its subcellular location is the cilium. It is found in the cytoskeleton. The protein localises to the cilium axoneme. In terms of biological role, plays a role in thermal stress response and in aging. In Caenorhabditis elegans, this protein is Yes-associated protein homolog 1.